A 368-amino-acid chain; its full sequence is Aminomethyltransferase (368 aa).

The protein belongs to the GcvT family. In terms of assembly, the glycine cleavage system is composed of four proteins: P, T, L and H.

The catalysed reaction is N(6)-[(R)-S(8)-aminomethyldihydrolipoyl]-L-lysyl-[protein] + (6S)-5,6,7,8-tetrahydrofolate = N(6)-[(R)-dihydrolipoyl]-L-lysyl-[protein] + (6R)-5,10-methylene-5,6,7,8-tetrahydrofolate + NH4(+). Its function is as follows. The glycine cleavage system catalyzes the degradation of glycine. The polypeptide is Aminomethyltransferase (Xylella fastidiosa (strain 9a5c)).